The primary structure comprises 255 residues: 20 kDa chaperonin, chloroplastic (255 aa).

Residues Met-1 to Ala-53 constitute a chloroplast transit peptide. Cpn-10 domain regions lie at residues Ala-54–Thr-156 and Asp-157–Ser-255.

The protein belongs to the GroES chaperonin family. In terms of assembly, forms stable complexes with CPN60 in the presence of ATP.

The protein resides in the plastid. Its subcellular location is the chloroplast. Functionally, seems to function only as a co-chaperone, along with cpn60, and in certain cases is essential for the discharge of biologically active proteins from cpn60. The sequence is that of 20 kDa chaperonin, chloroplastic (CPN21) from Spinacia oleracea (Spinach).